We begin with the raw amino-acid sequence, 215 residues long: Cytochrome b6 (215 aa).

The chain crosses the membrane as a helical span at residues 32–52 (IFYCLGGITLTCFLIQFATGF). Residue C35 participates in heme c binding. H86 and H100 together coordinate heme b. 3 consecutive transmembrane segments (helical) span residues 90-110 (ASMM…TGGF), 116-136 (LTWV…VTGY), and 186-206 (LHTF…FLMI). H187 and H202 together coordinate heme b.

This sequence belongs to the cytochrome b family. PetB subfamily. In terms of assembly, the 4 large subunits of the cytochrome b6-f complex are cytochrome b6, subunit IV (17 kDa polypeptide, PetD), cytochrome f and the Rieske protein, while the 4 small subunits are PetG, PetL, PetM and PetN. The complex functions as a dimer. Heme b is required as a cofactor. It depends on heme c as a cofactor.

It localises to the cellular thylakoid membrane. Component of the cytochrome b6-f complex, which mediates electron transfer between photosystem II (PSII) and photosystem I (PSI), cyclic electron flow around PSI, and state transitions. This Synechococcus elongatus (strain ATCC 33912 / PCC 7942 / FACHB-805) (Anacystis nidulans R2) protein is Cytochrome b6.